We begin with the raw amino-acid sequence, 305 residues long: Glutaminase (305 aa).

Positions 61, 113, 158, 165, 189, 241, and 259 each coordinate substrate.

It belongs to the glutaminase family. As to quaternary structure, homotetramer.

It catalyses the reaction L-glutamine + H2O = L-glutamate + NH4(+). The polypeptide is Glutaminase (Clostridium botulinum (strain ATCC 19397 / Type A)).